The chain runs to 156 residues: 6,7-dimethyl-8-ribityllumazine synthase (156 aa).

5-amino-6-(D-ribitylamino)uracil is bound by residues F23, 57-59 (AYE), and 81-83 (AII). 86–87 (GT) serves as a coordination point for (2S)-2-hydroxy-3-oxobutyl phosphate. H89 functions as the Proton donor in the catalytic mechanism. 5-amino-6-(D-ribitylamino)uracil is bound at residue F114. R128 lines the (2S)-2-hydroxy-3-oxobutyl phosphate pocket.

Belongs to the DMRL synthase family.

It catalyses the reaction (2S)-2-hydroxy-3-oxobutyl phosphate + 5-amino-6-(D-ribitylamino)uracil = 6,7-dimethyl-8-(1-D-ribityl)lumazine + phosphate + 2 H2O + H(+). Its pathway is cofactor biosynthesis; riboflavin biosynthesis; riboflavin from 2-hydroxy-3-oxobutyl phosphate and 5-amino-6-(D-ribitylamino)uracil: step 1/2. In terms of biological role, catalyzes the formation of 6,7-dimethyl-8-ribityllumazine by condensation of 5-amino-6-(D-ribitylamino)uracil with 3,4-dihydroxy-2-butanone 4-phosphate. This is the penultimate step in the biosynthesis of riboflavin. The polypeptide is 6,7-dimethyl-8-ribityllumazine synthase (Helicobacter acinonychis (strain Sheeba)).